The following is a 279-amino-acid chain: Thymidylate synthase (279 aa).

133–134 (RR) is a dUMP binding site. Cys154 acts as the Nucleophile in catalysis. Residues 178–181 (RSND), Asn189, and 219–221 (HIY) each bind dUMP. Asp181 contributes to the (6R)-5,10-methylene-5,6,7,8-tetrahydrofolate binding site. Position 278 (Ala278) interacts with (6R)-5,10-methylene-5,6,7,8-tetrahydrofolate.

The protein belongs to the thymidylate synthase family. Bacterial-type ThyA subfamily. As to quaternary structure, homodimer.

The protein localises to the cytoplasm. The enzyme catalyses dUMP + (6R)-5,10-methylene-5,6,7,8-tetrahydrofolate = 7,8-dihydrofolate + dTMP. The protein operates within pyrimidine metabolism; dTTP biosynthesis. Catalyzes the reductive methylation of 2'-deoxyuridine-5'-monophosphate (dUMP) to 2'-deoxythymidine-5'-monophosphate (dTMP) while utilizing 5,10-methylenetetrahydrofolate (mTHF) as the methyl donor and reductant in the reaction, yielding dihydrofolate (DHF) as a by-product. This enzymatic reaction provides an intracellular de novo source of dTMP, an essential precursor for DNA biosynthesis. This Streptococcus pneumoniae (strain ATCC 700669 / Spain 23F-1) protein is Thymidylate synthase.